Here is a 1486-residue protein sequence, read N- to C-terminus: MIERGKFRSLTLINWNGFFARTFDLDELVTTLSGGNGAGKSTTMAAFVTALIPDLTLLHFRNTTEAGATSGSRDKGLHGKLKAGVCYSMLDTINSRHQRVVVGVRLQQVAGRDRKVDIKPFAIQGLPMSVQPTQLVTETLNERQARVLPLNELKDKLEAMEGVQFKQFNSITDYHSLMFDLGIIARRLRSASDRSKFYRLIEASLYGGISSAITRSLRDYLLPENSGVRKAFQDMEAALRENRMTLEAIRVTQSDRDLFKHLISEATNYVAADYMRHANERRVHLDKALEFRRELHTSRQQLAAEQYKHVDMARELAEHNGAEGDLEADYQAASDHLNLVQTALRQQEKIERYEADLDELQIRLEEQNEVVAEAIERQEENEARAEAAELEVDELKSQLADYQQALDVQQTRAIQYNQAIAALNRAKELCHLPDLTADSAAEWLETFQAKELEATEKMLSLEQKMSMAQTAHSQFEQAYQLVVAINGPLARNEAWDVARELLREGVDQRHLAEQVQPLRMRLSELEQRLREQQEAERLLADFCKRQGKNFDIDELEALHQELEARIASLSDSVSNAREERMALRQEQEQLQSRIQSLMQRAPVWLAAQNSLNQLSEQCGEEFTSSQDVTEYLQQLLEREREAIVERDEVGARKNAVDEEIERLSQPGGSEDQRLNALAERFGGVLLSEIYDDVSLEDAPYFSALYGPSRHAIVVPDLSQVTEHLEGLTDCPEDLYLIEGDPQSFDDSVFSVDELEKAVVVKIADRQWRYSRFPEVPLFGRAARESRIESLHAEREVLSERFATLSFDVQKTQRLHQAFSRFIGSHLAVAFESDPEAEIRQLNSRRVELERALSNHENDNQQQRIQFEQAKEGVTALNRILPRLNLLADDSLADRVDEIRERLDEAQEAARFVQQFGNQLAKLEPIVSVLQSDPEQFEQLKEDYAYSQQMQRDARQQAFALTEVVQRRAHFSYSDSAEMLSGNSDLNEKLRERLEQAEAERTRAREALRGHAAQLSQYNQVLASLKSSYDTKKELLNDLQRELQDIGVRADSGAEERARIRRDELHAQLSNNRSRRNQLEKALTFCEAEMDNLTRKLRKLERDYFEMREQVVTAKAGWCAVMRMVKDNGVERRLHRRELAYLSADDLRSMSDKALGALRLAVADNEHLRDVLRMSEDPKRPERKIQFFVAVYQHLRERIRQDIIRTDDPVEAIEQMEIELSRLTEELTSREQKLAISSRSVANIIRKTIQREQNRIRMLNQGLQNVSFGQVNSVRLNVNVRETHAMLLDVLSEQHEQHQDLFNSNRLTFSEALAKLYQRLNPQIDMGQRTPQTIGEELLDYRNYLEMEVEVNRGSDGWLRAESGALSTGEAIGTGMSILVMVVQSWEDESRRLRGKDISPCRLLFLDEAARLDARSIATLFELCERLQMQLIIAAPENISPEKGTTYKLVRKVFQNTEHVHVVGLRGFAPQLPETLPGSDEAPSQAS.

Position 34–41 (34–41) interacts with ATP; it reads GGNGAGKS. 3 coiled-coil regions span residues 326 to 418, 444 to 480, and 509 to 603; these read LEAD…QYNQ, LETF…QAYQ, and RHLA…RAPV. The flexible hinge stretch occupies residues 666-783; the sequence is PGGSEDQRLN…EVPLFGRAAR (118 aa). Coiled coils occupy residues 835–923, 977–1115, and 1209–1266; these read EAEI…AKLE, EMLS…TAKA, and VEAI…QNVS.

Belongs to the SMC family. MukB subfamily. In terms of assembly, homodimerization via its hinge domain. Binds to DNA via its C-terminal region. Interacts, and probably forms a ternary complex, with MukE and MukF via its C-terminal region. The complex formation is stimulated by calcium or magnesium. Interacts with tubulin-related protein FtsZ.

It is found in the cytoplasm. The protein resides in the nucleoid. Plays a central role in chromosome condensation, segregation and cell cycle progression. Functions as a homodimer, which is essential for chromosome partition. Involved in negative DNA supercoiling in vivo, and by this means organize and compact chromosomes. May achieve or facilitate chromosome segregation by condensation DNA from both sides of a centrally located replisome during cell division. This chain is Chromosome partition protein MukB, found in Escherichia coli O157:H7.